The following is a 67-amino-acid chain: Large ribosomal subunit protein bL35 (67 aa).

The protein belongs to the bacterial ribosomal protein bL35 family.

The protein is Large ribosomal subunit protein bL35 of Paramagnetospirillum magneticum (strain ATCC 700264 / AMB-1) (Magnetospirillum magneticum).